Here is a 784-residue protein sequence, read N- to C-terminus: Endonuclease MutS2 (784 aa).

Residue 335–342 (GPNTGGKT) coordinates ATP. One can recognise a Smr domain in the interval 709–784 (LDLRGERYED…GTGVTIVELK (76 aa)).

Belongs to the DNA mismatch repair MutS family. MutS2 subfamily. In terms of assembly, homodimer. Binds to stalled ribosomes, contacting rRNA.

Endonuclease that is involved in the suppression of homologous recombination and thus may have a key role in the control of bacterial genetic diversity. Its function is as follows. Acts as a ribosome collision sensor, splitting the ribosome into its 2 subunits. Detects stalled/collided 70S ribosomes which it binds and splits by an ATP-hydrolysis driven conformational change. Acts upstream of the ribosome quality control system (RQC), a ribosome-associated complex that mediates the extraction of incompletely synthesized nascent chains from stalled ribosomes and their subsequent degradation. Probably generates substrates for RQC. This is Endonuclease MutS2 from Geobacillus kaustophilus (strain HTA426).